The following is a 439-amino-acid chain: Transcription factor pydF (439 aa).

The span at 1-18 (MGRPQRADKQRRETDGPQ) shows a compositional bias: basic and acidic residues. Disordered regions lie at residues 1–53 (MGRP…GYAR), 143–177 (HVEK…QAVE), and 239–262 (AFRD…MQQH). A compositionally biased stretch (polar residues) spans 20-35 (SRPSLTQAQKNSTTIR). Residues 143 to 153 (HVEKATAERPG) show a composition bias toward basic and acidic residues. A compositionally biased stretch (low complexity) spans 157-172 (SSSPSSSLLRTSSSPS). The span at 243–260 (GQNNGTSRPNTAASQNMQ) shows a compositional bias: polar residues.

It localises to the nucleus. Functionally, transcription factor; part of the gene cluster that mediates the biosynthesis of pyrrocidines, fungal natural products containing a macrocyclic para-cyclophane connected to a decahydrofluorene ring system that show potent antibiotic activities toward Gram-negative bacteria. The chain is Transcription factor pydF from Acremonium sp.